The primary structure comprises 1169 residues: Chromosome partition protein Smc (1169 aa).

Pro32–Asn39 contributes to the ATP binding site. Coiled-coil stretches lie at residues Ile170–Glu265 and Ile307–Asn481. Positions Asp525 to Glu620 constitute an SMC hinge domain. Coiled coils occupy residues Ala656–Ala914 and Arg985–Ala1014.

It belongs to the SMC family. Homodimer.

It localises to the cytoplasm. Its function is as follows. Required for chromosome condensation and partitioning. This chain is Chromosome partition protein Smc, found in Methylococcus capsulatus (strain ATCC 33009 / NCIMB 11132 / Bath).